A 499-amino-acid polypeptide reads, in one-letter code: MMSPPLRYQKDQQNQQHQQNQSQQAAHQMVSFMPQTPTSLPSTPIQLYPTGAAALIPAPPTYELIPNRIFVGGFPTSTTETELREHFEKFFAVKDVKMVKSLDGQSKGYGFITFETEDQAEEIRKLTPKQLEFRSRKLNLGPAIRKINSNSFQPSYAIATPSQLVAASPGPFSYAIPASPSPYSGYSYPASPQMFVYPPLRSQDQSRQQSEQQTTPQNSPTNLQHQQSPQVFFGGDQDPIRSYASAVAGVEKSEVSPEKHESVSPQPLLPNQNVLNTQYSQGQQQWNSNVQQQQQQQMDSNNGGPYYNENYSQGYTRPHPYQQFAQSGVYMNSQGMYHSSYSYMTPPLAPGQYPQMMSAPYWQQQQQHHQSHAYAGYNPAYNNWVGPSGDMNQFKQNPSNYFYQNYPGNFSQQHTMGNNENTFSLPLQAPRQGKKSRKPSECQDKKTKSPIKGARTERPSSSASTPDAKYQKNHRYPVHLSPLSASLQSLAISSPTKNN.

The tract at residues 1–29 is disordered; it reads MMSPPLRYQKDQQNQQHQQNQSQQAAHQM. The segment covering 12 to 28 has biased composition (low complexity); that stretch reads QQNQQHQQNQSQQAAHQ. In terms of domain architecture, RRM spans 66 to 144; it reads PNRIFVGGFP…SRKLNLGPAI (79 aa). The segment covering 195–224 has biased composition (low complexity); sequence FVYPPLRSQDQSRQQSEQQTTPQNSPTNLQ. Disordered regions lie at residues 195–304 and 406–499; these read FVYP…NNGG and YPGN…TKNN. Positions 214–236 constitute a DAZ domain; the sequence is TTPQNSPTNLQHQQSPQVFFGGD. Residues 251–262 are compositionally biased toward basic and acidic residues; it reads EKSEVSPEKHES. Positions 263–279 are enriched in polar residues; it reads VSPQPLLPNQNVLNTQY. Over residues 280-304 the composition is skewed to low complexity; that stretch reads SQGQQQWNSNVQQQQQQQMDSNNGG. Residues 406 to 425 show a composition bias toward polar residues; it reads YPGNFSQQHTMGNNENTFSL. Basic and acidic residues predominate over residues 438-447; the sequence is KPSECQDKKT. Residues 480-499 are compositionally biased toward low complexity; sequence LSPLSASLQSLAISSPTKNN.

The protein belongs to the RRM DAZ family. As to expression, germline specific. More strongly expressed during oogenesis than during spermatogenesis. During the larval stages, it is more abundant at the distal region than the proximal region of the gonad. In young adult hermaphrodites, it is expressed at a very low level in the distal mitotic region of the gonad, and begins to accumulate in the meiotic transition zone. Highly expressed in the proximal pachytene region. Not expressed in mature oocytes. Not expressed in the spermatheca. Weakly or not expressed in the germline of adult males.

In terms of biological role, RNA-binding protein that plays a central role in oogenesis, but not for spermatogenesis. Required for meiotic entry and germline differentiation, at the pachytene stage of meiosis I of female germline regardless of the sex of the soma. May act by regulating translation of specific mRNAs, possibly by binding to their 3'-UTR. This chain is DAZ protein 1 (daz-1), found in Caenorhabditis elegans.